Here is a 517-residue protein sequence, read N- to C-terminus: Cytochrome P450 monooxygenase penP (517 aa).

Residues 17–37 (GEATVIWILVALVLVAYLILP) traverse the membrane as a helical segment. C456 lines the heme pocket. N501 carries N-linked (GlcNAc...) asparagine glycosylation.

This sequence belongs to the cytochrome P450 family. Heme serves as cofactor.

The protein localises to the membrane. It functions in the pathway secondary metabolite biosynthesis. Functionally, cytochrome P450 monooxygenase; part of the gene cluster that mediates the biosynthesis of the indole diterpenes penitrems. The geranylgeranyl diphosphate (GGPP) synthase penG catalyzes the first step in penitrem biosynthesis via conversion of farnesyl pyrophosphate and isopentyl pyrophosphate into geranylgeranyl pyrophosphate (GGPP). Condensation of indole-3-glycerol phosphate with GGPP by the prenyl transferase penC then forms 3-geranylgeranylindole (3-GGI). Epoxidation by the FAD-dependent monooxygenase penM leads to a epoxidized-GGI that is substrate of the terpene cyclase penB for cyclization to yield paspaline. Paspaline is subsequently converted to 13-desoxypaxilline by the cytochrome P450 monooxygenase penP, the latter being then converted to paxilline by the cytochrome P450 monooxygenase penQ. Paxilline is converted to beta-paxitriol via C-10 ketoreduction by the short-chain dehydrogenase PC-15 which can be monoprenylated at the C-20 by the indole diterpene prenyltransferase penD. A two-step elimination (acetylation and elimination) process performed by the O-acetyltransferase PC-16 and the P.simplicissimum ptmI-ortholog not yet identified in P.crustosum, leads to the production of the prenylated form of penijanthine. The FAD-linked oxidoreductase ptmO then converts the prenylated form of penijanthine into PC-M5 which is in turn transformed into PC-M4 by the aromatic dimethylallyltransferase PC-22. A series of oxidation steps involving 4 cytochrome P450 monooxygenases (PC-21, PC-05, PC-23, PC-20) and a FAD-dependent monooxygenase (PC-14) are required for the transformation of PC-M4 to penitrems A and E. Synthesis of these final products is proposed to proceed via penitrems D and C (PC-21, PC-05, PC-14) and penitrems B and F (PC-21, PC-05, PC-14, PC-23). The sequence is that of Cytochrome P450 monooxygenase penP from Penicillium crustosum (Blue mold fungus).